A 1386-amino-acid chain; its full sequence is DNA-directed RNA polymerase subunit beta (1386 aa).

This sequence belongs to the RNA polymerase beta chain family. In plastids the minimal PEP RNA polymerase catalytic core is composed of four subunits: alpha, beta, beta', and beta''. When a (nuclear-encoded) sigma factor is associated with the core the holoenzyme is formed, which can initiate transcription.

It localises to the plastid. Its subcellular location is the chloroplast. It catalyses the reaction RNA(n) + a ribonucleoside 5'-triphosphate = RNA(n+1) + diphosphate. Its function is as follows. DNA-dependent RNA polymerase catalyzes the transcription of DNA into RNA using the four ribonucleoside triphosphates as substrates. This is DNA-directed RNA polymerase subunit beta from Thalassiosira pseudonana (Marine diatom).